An 88-amino-acid chain; its full sequence is uncharacterized protein (88 aa).

An N-terminal signal peptide occupies residues 1-24 (MLPRSCKDFYETLRTAVLCGQACA).

The protein to Rhizobium NGR234A y4oL.

This is an uncharacterized protein from Sinorhizobium fredii (strain NBRC 101917 / NGR234).